The sequence spans 406 residues: MKLPIYLDYAATTPMDERVVQKMMQYMTKDGIFGNPASRSHKFGWEAEEAVDIARNHIADLIGADSREIVFTSGATESDNLAIKGAAHFYQTKGKHIITLKTEHKAVLDTCRQLEREGFEVTYLEPESDGLLDLTKLVEAIRPDTILISIMHVNNEIGVVQDIKAIGEICRARKIIFHVDATQSVGKLAVNVQELKVDLMSFSSHKLYGPKGIGGLYVCRKPRIRIEAIIHGGGHERGMRSGTLPVHQIVGMGEAYRIAKEEMATEMPRLKALRDRLYHGFQAIEEVYVNGSMEEGKRVDTNLNMSFNFVEGESLMMALRDIAVSSGSACTSASLEPSYVLRAIGRNDELAHSSIRFSLGRWATEEEIDYTIELVKKSILKLRELSPLWEMFKEGIDLSKIEWNHH.

Residues 75–76, Asn-155, Gln-183, and 203–205 contribute to the pyridoxal 5'-phosphate site; these read AT and SSH. Lys-206 is modified (N6-(pyridoxal phosphate)lysine). Residue Thr-243 coordinates pyridoxal 5'-phosphate. Cys-330 serves as the catalytic Cysteine persulfide intermediate. Cys-330 is a [2Fe-2S] cluster binding site.

This sequence belongs to the class-V pyridoxal-phosphate-dependent aminotransferase family. NifS/IscS subfamily. In terms of assembly, homodimer. Forms a heterotetramer with IscU, interacts with other sulfur acceptors. The cofactor is pyridoxal 5'-phosphate.

The protein resides in the cytoplasm. The enzyme catalyses (sulfur carrier)-H + L-cysteine = (sulfur carrier)-SH + L-alanine. It functions in the pathway cofactor biosynthesis; iron-sulfur cluster biosynthesis. In terms of biological role, master enzyme that delivers sulfur to a number of partners involved in Fe-S cluster assembly, tRNA modification or cofactor biosynthesis. Catalyzes the removal of elemental sulfur atoms from cysteine to produce alanine. Functions as a sulfur delivery protein for Fe-S cluster synthesis onto IscU, an Fe-S scaffold assembly protein, as well as other S acceptor proteins. This is Cysteine desulfurase IscS from Haemophilus ducreyi (strain 35000HP / ATCC 700724).